The sequence spans 398 residues: tRNA N6-adenosine threonylcarbamoyltransferase (398 aa).

His-162, His-166, and Tyr-183 together coordinate a divalent metal cation. Substrate-binding positions include 183-187, Asp-215, Gly-230, Glu-234, and Asn-329; that span reads YVSGG. Asp-357 contributes to the a divalent metal cation binding site.

It belongs to the KAE1 / TsaD family. Component of the EKC/KEOPS complex composed of at least BUD32, CGI121, GON7, KAE1 and PCC1; the whole complex dimerizes. A divalent metal cation is required as a cofactor.

The protein localises to the cytoplasm. It is found in the nucleus. It catalyses the reaction L-threonylcarbamoyladenylate + adenosine(37) in tRNA = N(6)-L-threonylcarbamoyladenosine(37) in tRNA + AMP + H(+). Component of the EKC/KEOPS complex that is required for the formation of a threonylcarbamoyl group on adenosine at position 37 (t(6)A37) in tRNAs that read codons beginning with adenine. The complex is probably involved in the transfer of the threonylcarbamoyl moiety of threonylcarbamoyl-AMP (TC-AMP) to the N6 group of A37. KAE1 likely plays a direct catalytic role in this reaction, but requires other protein(s) of the complex to fulfill this activity. The EKC/KEOPS complex also promotes both telomere uncapping and telomere elongation. The complex is required for efficient recruitment of transcriptional coactivators. The polypeptide is tRNA N6-adenosine threonylcarbamoyltransferase (Cryptococcus neoformans var. neoformans serotype D (strain B-3501A) (Filobasidiella neoformans)).